Consider the following 1477-residue polypeptide: Neurexin-1 (1477 aa).

Positions 1–30 are cleaved as a signal peptide; it reads MGTALLQRGGCFLLCLSLLLLGCWAELGSG. The Laminin G-like 1 domain maps to 31–217; it reads LEFPGAEGQW…PPNSGGGSPC (187 aa). At 31 to 1401 the chain is on the extracellular side; the sequence is LEFPGAEGQW…EVIRESSSTT (1371 aa). Asn-125 and Asn-190 each carry an N-linked (GlcNAc...) asparagine glycan. The interval 198–221 is disordered; sequence DSGEVKLDDEPPNSGGGSPCEAGE. The 44-residue stretch at 213-256 folds into the EGF-like 1 domain; the sequence is GGSPCEAGEEGEGGVCLNGGVCSVVDDQAVCDCSRTGFRGKDCS. Cystine bridges form between Cys-228–Cys-243 and Cys-245–Cys-255. 2 Laminin G-like domains span residues 283 to 473 and 480 to 672; these read IATF…AFKC and DPIT…KPSC. Residues Asp-329, Leu-346, and Met-407 each contribute to the Ca(2+) site. Cystine bridges form between Cys-437–Cys-473, Cys-643–Cys-672, Cys-680–Cys-691, Cys-685–Cys-700, and Cys-702–Cys-712. Residues 676–713 form the EGF-like 2 domain; sequence TAKPCLSNPCKNNGMCRDGWNRYVCDCSGTGYLGRSCE. 2 consecutive Laminin G-like domains span residues 718 to 891 and 905 to 1080; these read VLSY…IDYC and DPVT…ERGC. Ca(2+)-binding residues include Asp-765 and Leu-782. The N-linked (GlcNAc...) asparagine glycan is linked to Asn-790. Arg-841 provides a ligand contact to Ca(2+). 5 disulfide bridges follow: Cys-883–Cys-891, Cys-1052–Cys-1080, Cys-1087–Cys-1098, Cys-1092–Cys-1107, and Cys-1109–Cys-1119. The EGF-like 3 domain maps to 1083–1120; that stretch reads PSTTCQEDSCSNQGVCLQQWDGFSCDCSMTSFSGPLCN. Residues 1126 to 1294 form the Laminin G-like 6 domain; that stretch reads YIFSKGGGQI…DANIAIVGNV (169 aa). Ca(2+) is bound by residues Asp-1176 and Val-1193. The N-linked (GlcNAc...) asparagine glycan is linked to Asn-1223. Positions 1245 and 1247 each coordinate Ca(2+). The interval 1325 to 1390 is disordered; the sequence is TTTLATSTAR…AGGREPYPGS (66 aa). The O-linked (Xyl...) (heparan sulfate) serine glycan is linked to Ser-1355. Residues 1402 to 1422 form a helical membrane-spanning segment; sequence GMVVGIVAAAALCILILLYAM. Over 1423–1477 the chain is Cytoplasmic; sequence YKYRNRDEGSYHVDESRNYISNSAQSNGAVVKEKQPSSAKSSNKNKKNKDKEYYV. The interval 1444–1470 is interaction with CASK; it reads NSAQSNGAVVKEKQPSSAKSSNKNKKN. The disordered stretch occupies residues 1444 to 1477; the sequence is NSAQSNGAVVKEKQPSSAKSSNKNKKNKDKEYYV.

Belongs to the neurexin family. As to quaternary structure, interacts (via laminin G-like domain 2 and/or laminin G-like domain 6) with NLGN1 forming a heterotetramer, where one NLGN1 dimer interacts with one NRXN1 dimer. Also interacts (via laminin G-like domain 2 and/or laminin G-like domain 6) with NLGN2, NLGN3 and NLGN4L; interactions with NLGN1, NLGN2, NLGN3 and NLGN4L are calcium-dependent. Interacts (via cytoplasmic C-terminal region) with CASK (via the PDZ, SH3 and guanylate kinase-like domains). Interacts (via cytoplasmic C-terminus) with CASKIN1 and APBA1. Interacts (via laminin G-like domain 2) with NXPH1 and NXPH3. Alpha-type isoforms (neurexin-1-alpha) interact (via laminin G-like domain 2 and/or laminin G-like domain 6) with DAG1 (via alpha-dystroglycan chain). Interacts with LRRTM1, LRRTM2, LRRTM3 and LRRTM4. Interacts with SYT13 and SYTL1. Interacts with CBLN1, CBLN2 and, less avidly, with CBLN4. Interacts with CLSTN3. O-glycosylated; contains heparan sulfate. Heparan sulfate attachment is required for synapse development by mediating interactions with neuroligins and LRRTM2. In terms of tissue distribution, brain.

Its subcellular location is the presynaptic cell membrane. Cell surface protein involved in cell-cell-interactions, exocytosis of secretory granules and regulation of signal transmission. Function is isoform-specific. Alpha-type isoforms have a long N-terminus with six laminin G-like domains and play an important role in synaptic signal transmission. Alpha-type isoforms play a role in the regulation of calcium channel activity and Ca(2+)-triggered neurotransmitter release at synapses and at neuromuscular junctions. They play an important role in Ca(2+)-triggered exocytosis of secretory granules in pituitary gland. They may affect their functions at synapses and in endocrine cells via their interactions with proteins from the exocytotic machinery. Likewise, alpha-type isoforms play a role in regulating the activity of postsynaptic NMDA receptors, a subtype of glutamate-gated ion channels. Both alpha-type and beta-type isoforms may play a role in the formation or maintenance of synaptic junctions via their interactions (via the extracellular domains) with neuroligin family members, CBLN1 or CBLN2. In vitro, triggers the de novo formation of presynaptic structures. May be involved in specification of excitatory synapses. Alpha-type isoforms were first identified as receptors for alpha-latrotoxin from spider venom. This is Neurexin-1 (NRXN1) from Homo sapiens (Human).